The primary structure comprises 389 residues: Chalcone synthase (389 aa).

C164 is a catalytic residue.

This sequence belongs to the thiolase-like superfamily. Chalcone/stilbene synthases family.

The enzyme catalyses (E)-4-coumaroyl-CoA + 3 malonyl-CoA + 3 H(+) = 2',4,4',6'-tetrahydroxychalcone + 3 CO2 + 4 CoA. The protein operates within secondary metabolite biosynthesis; flavonoid biosynthesis. In terms of biological role, the primary product of this enzyme is 4,2',4',6'-tetrahydroxychalcone (also termed naringenin-chalcone or chalcone) which can under specific conditions spontaneously isomerize into naringenin. This is Chalcone synthase (CHS) from Hydrangea macrophylla (Bigleaf hydrangea).